A 469-amino-acid polypeptide reads, in one-letter code: MNPNQKIITIGSVSLTIATICFLMQIAILVTTVTLHFKQYECNSPPNNQVMLCEPTIIERNITEIVYLTNTTIEKEICPKLAEYRNWSKPQCKITGFAPFSKDNSIRLSAGGDIWVTREPYVSCDPDKCYQFALGQGTTLNNRHSNDTVHDRTPYRTLLMNELGVPFHLGTKQVCIAWSSSSCHDGKAWLHVCVTGHDENATASFIYDGRLVDSIGSWSKKILRTQESECVCINGTCTVVMTDGSASGRADTKILFIEEGKIVHISPLSGSAQHVEECSCYPRYSGVRCVCRDNWKGSNRPIVDINVKDYSIVSSYVCSGLVGDTPRKNDSSSSSHCLNPNNEEGGHGVKGWAFDDGNDVWMGRTISEKLRSGYETFKVIGGWSKPNSKLQINRQVIVDRGNRSGYSGIFSVEGKSCINRCFYVELIRGRKQETEVWWTSNSIVVFCGTSGTYGTGSWPDGADINLMPI.

Topologically, residues 1 to 9 (MNPNQKIIT) are intravirion. A helical transmembrane segment spans residues 10-30 (IGSVSLTIATICFLMQIAILV). The tract at residues 11–33 (GSVSLTIATICFLMQIAILVTTV) is involved in apical transport and lipid raft association. The Virion surface portion of the chain corresponds to 31–469 (TTVTLHFKQY…DGADINLMPI (439 aa)). Residues 36 to 88 (HFKQYECNSPPNNQVMLCEPTIIERNITEIVYLTNTTIEKEICPKLAEYRNWS) form a hypervariable stalk region region. N-linked (GlcNAc...) asparagine; by host glycosylation is found at N61, N70, and N86. The head of neuraminidase stretch occupies residues 91–469 (QCKITGFAPF…DGADINLMPI (379 aa)). Disulfide bonds link C92-C417, C124-C129, C183-C230, C232-C237, C278-C291, C280-C289, C318-C337, and C421-C447. R118 lines the substrate pocket. N146 carries an N-linked (GlcNAc...) asparagine; by host glycan. D151 functions as the Proton donor/acceptor in the catalytic mechanism. R152 lines the substrate pocket. N-linked (GlcNAc...) asparagine; by host glycans are attached at residues N200 and N234. Substrate is bound at residue 276-277 (EE). R292 provides a ligand contact to substrate. Ca(2+)-binding residues include D293, G297, and D324. N329 is a glycosylation site (N-linked (GlcNAc...) asparagine; by host). R371 lines the substrate pocket. N-linked (GlcNAc...) asparagine; by host glycosylation occurs at N402. Y406 functions as the Nucleophile in the catalytic mechanism.

Belongs to the glycosyl hydrolase 34 family. As to quaternary structure, homotetramer. The cofactor is Ca(2+). Post-translationally, N-glycosylated.

It is found in the virion membrane. Its subcellular location is the host apical cell membrane. The enzyme catalyses Hydrolysis of alpha-(2-&gt;3)-, alpha-(2-&gt;6)-, alpha-(2-&gt;8)- glycosidic linkages of terminal sialic acid residues in oligosaccharides, glycoproteins, glycolipids, colominic acid and synthetic substrates.. Its activity is regulated as follows. Inhibited by the neuraminidase inhibitors zanamivir (Relenza) and oseltamivir (Tamiflu). These drugs interfere with the release of progeny virus from infected cells and are effective against all influenza strains. Resistance to neuraminidase inhibitors is quite rare. Its function is as follows. Catalyzes the removal of terminal sialic acid residues from viral and cellular glycoconjugates. Cleaves off the terminal sialic acids on the glycosylated HA during virus budding to facilitate virus release. Additionally helps virus spread through the circulation by further removing sialic acids from the cell surface. These cleavages prevent self-aggregation and ensure the efficient spread of the progeny virus from cell to cell. Otherwise, infection would be limited to one round of replication. Described as a receptor-destroying enzyme because it cleaves a terminal sialic acid from the cellular receptors. May facilitate viral invasion of the upper airways by cleaving the sialic acid moieties on the mucin of the airway epithelial cells. Likely to plays a role in the budding process through its association with lipid rafts during intracellular transport. May additionally display a raft-association independent effect on budding. Plays a role in the determination of host range restriction on replication and virulence. Sialidase activity in late endosome/lysosome traffic seems to enhance virus replication. This chain is Neuraminidase, found in Influenza A virus (strain A/Niigata/137/1996 H3N2).